We begin with the raw amino-acid sequence, 547 residues long: Glutamyl-tRNA(Gln) amidotransferase subunit B, mitochondrial (547 aa).

Belongs to the GatB/GatE family. GatB subfamily. As to quaternary structure, subunit of the heterotrimeric GatFAB amidotransferase (AdT) complex, composed of A, B and F subunits.

The protein localises to the mitochondrion. The enzyme catalyses L-glutamyl-tRNA(Gln) + L-glutamine + ATP + H2O = L-glutaminyl-tRNA(Gln) + L-glutamate + ADP + phosphate + H(+). Allows the formation of correctly charged Gln-tRNA(Gln) through the transamidation of misacylated Glu-tRNA(Gln) in the mitochondria. The reaction takes place in the presence of glutamine and ATP through an activated gamma-phospho-Glu-tRNA(Gln). In Lachancea thermotolerans (strain ATCC 56472 / CBS 6340 / NRRL Y-8284) (Yeast), this protein is Glutamyl-tRNA(Gln) amidotransferase subunit B, mitochondrial.